Consider the following 178-residue polypeptide: ATP synthase subunit delta (178 aa).

This sequence belongs to the ATPase delta chain family. As to quaternary structure, F-type ATPases have 2 components, F(1) - the catalytic core - and F(0) - the membrane proton channel. F(1) has five subunits: alpha(3), beta(3), gamma(1), delta(1), epsilon(1). F(0) has three main subunits: a(1), b(2) and c(10-14). The alpha and beta chains form an alternating ring which encloses part of the gamma chain. F(1) is attached to F(0) by a central stalk formed by the gamma and epsilon chains, while a peripheral stalk is formed by the delta and b chains.

The protein localises to the cell inner membrane. F(1)F(0) ATP synthase produces ATP from ADP in the presence of a proton or sodium gradient. F-type ATPases consist of two structural domains, F(1) containing the extramembraneous catalytic core and F(0) containing the membrane proton channel, linked together by a central stalk and a peripheral stalk. During catalysis, ATP synthesis in the catalytic domain of F(1) is coupled via a rotary mechanism of the central stalk subunits to proton translocation. In terms of biological role, this protein is part of the stalk that links CF(0) to CF(1). It either transmits conformational changes from CF(0) to CF(1) or is implicated in proton conduction. The polypeptide is ATP synthase subunit delta (Aromatoleum aromaticum (strain DSM 19018 / LMG 30748 / EbN1) (Azoarcus sp. (strain EbN1))).